Consider the following 432-residue polypeptide: Glutamate-1-semialdehyde 2,1-aminomutase (432 aa).

An N6-(pyridoxal phosphate)lysine modification is found at Lys272.

It belongs to the class-III pyridoxal-phosphate-dependent aminotransferase family. HemL subfamily. In terms of assembly, homodimer. The cofactor is pyridoxal 5'-phosphate.

The protein localises to the cytoplasm. It carries out the reaction (S)-4-amino-5-oxopentanoate = 5-aminolevulinate. Its pathway is porphyrin-containing compound metabolism; protoporphyrin-IX biosynthesis; 5-aminolevulinate from L-glutamyl-tRNA(Glu): step 2/2. It functions in the pathway porphyrin-containing compound metabolism; chlorophyll biosynthesis. The sequence is that of Glutamate-1-semialdehyde 2,1-aminomutase from Picosynechococcus sp. (strain ATCC 27264 / PCC 7002 / PR-6) (Agmenellum quadruplicatum).